The following is a 318-amino-acid chain: Taste receptor type 2 member 60 (318 aa).

Over 1-7 the chain is Extracellular; the sequence is MNGDHMV. A helical transmembrane segment spans residues 8–28; that stretch reads LGSSVTDQKAIILVIILLLLC. Residues 29–40 are Cytoplasmic-facing; the sequence is LVAIAGNGFITA. The chain crosses the membrane as a helical span at residues 41–61; that stretch reads ALGVEWVLRGTLLPCDKLLVS. Residues 62 to 88 are Extracellular-facing; that stretch reads LRASRFCLQWVVMGKTIYVLLYPTAFP. A helical transmembrane segment spans residues 89–109; that stretch reads YNPVLQFLAFQWDFLNAATLW. The Cytoplasmic portion of the chain corresponds to 110-128; that stretch reads FSSWLSVFYCVKIATFTHP. The chain crosses the membrane as a helical span at residues 129-149; it reads VFLWLKHKLSEWVPWMFFSSV. Over 150 to 183 the chain is Extracellular; that stretch reads GLSSFTTILFFIGNHSIYQNYLRNHLQPWNVTGN. N-linked (GlcNAc...) asparagine glycans are attached at residues Asn163 and Asn179. A helical transmembrane segment spans residues 184–204; sequence SIWSYCEKFYLFPVKMITWTM. The Cytoplasmic portion of the chain corresponds to 205–234; that stretch reads PTAVFFICMILLITSLGRHMEKALLTTSGF. A helical membrane pass occupies residues 235–255; that stretch reads REPSVQAHVKALLALLSLAML. Over 256–264 the chain is Extracellular; sequence FISYFLSLV. A helical transmembrane segment spans residues 265-285; it reads LSAAGIFPPLDFKFWVGESVI. Topologically, residues 286–318 are cytoplasmic; sequence YLCAGVHPIILLFSNRRLRAVLERCRSSRCRTP.

This sequence belongs to the G-protein coupled receptor T2R family.

It localises to the membrane. Receptor that may play a role in the perception of bitterness and is gustducin-linked. May play a role in sensing the chemical composition of the gastrointestinal content. The activity of this receptor may stimulate alpha gustducin, mediate PLC-beta-2 activation and lead to the gating of TRPM5. In Macaca mulatta (Rhesus macaque), this protein is Taste receptor type 2 member 60 (TAS2R60).